Reading from the N-terminus, the 266-residue chain is Non-structural maintenance of chromosomes element 1 homolog (266 aa).

Residues 1-102 form an interaction with NSMCE3 region; it reads MQGSTRRMSV…SISKMATDFA (102 aa). An RING-type; atypical zinc finger spans residues 191–232; the sequence is CNICHSLLIQGQSCETCGIRMHLPCVAKYFQSNAEPRCPHCN. The interval 245 to 266 is disordered; that stretch reads PEKERESGVSKSNKKSLRSRQH. A Phosphoserine modification is found at Ser251. A compositionally biased stretch (basic residues) spans 256-266; the sequence is SNKKSLRSRQH.

It belongs to the NSE1 family. As to quaternary structure, component of the SMC5-SMC6 complex which consists at least of SMC5, SMC6, NSMCE2, NSMCE1, NSMCE4A or EID3 and NSMCE3. NSMCE1, NSMCE4A or EID3 and NSMCE3 probably form a subcomplex that bridges the head domains of the SMC5-SMC6 heterodimer. Interacts with NSMCE3. Post-translationally, ubiquitinated.

It localises to the nucleus. It is found in the chromosome. Its subcellular location is the telomere. The catalysed reaction is S-ubiquitinyl-[E2 ubiquitin-conjugating enzyme]-L-cysteine + [acceptor protein]-L-lysine = [E2 ubiquitin-conjugating enzyme]-L-cysteine + N(6)-ubiquitinyl-[acceptor protein]-L-lysine.. In terms of biological role, RING-type zinc finger-containing E3 ubiquitin ligase that assembles with melanoma antigen protein (MAGE) to catalyze the direct transfer of ubiquitin from E2 ubiquitin-conjugating enzyme to a specific substrate. Within MAGE-RING ubiquitin ligase complex, MAGE stimulates and specifies ubiquitin ligase activity likely through recruitment and/or stabilization of the E2 ubiquitin-conjugating enzyme at the E3:substrate complex. Involved in maintenance of genome integrity, DNA damage response and DNA repair. NSMCE3/MAGEG1 and NSMCE1 ubiquitin ligase are components of SMC5-SMC6 complex and may positively regulate homologous recombination-mediated DNA repair. The sequence is that of Non-structural maintenance of chromosomes element 1 homolog (NSMCE1) from Pongo abelii (Sumatran orangutan).